We begin with the raw amino-acid sequence, 483 residues long: NADH-quinone oxidoreductase subunit N (483 aa).

Helical transmembrane passes span 9 to 29, 35 to 55, 69 to 89, 104 to 124, 158 to 178, 201 to 221, 234 to 254, 272 to 292, 297 to 317, 325 to 345, 368 to 388, 404 to 424, and 449 to 469; these read LVLP…WGAF, PLFT…AVVG, AAAT…IVLG, AVLV…GDLI, FVLG…IYGF, VGLL…VSAA, APTS…MMMF, VLII…LAQT, LWAY…ATGG, LLFM…LQAL, IAVA…FSGF, VLLQ…AFYY, and AVGF…LIWL.

The protein belongs to the complex I subunit 2 family. NDH-1 is composed of 14 different subunits. Subunits NuoA, H, J, K, L, M, N constitute the membrane sector of the complex.

It is found in the cell inner membrane. It catalyses the reaction a quinone + NADH + 5 H(+)(in) = a quinol + NAD(+) + 4 H(+)(out). Its function is as follows. NDH-1 shuttles electrons from NADH, via FMN and iron-sulfur (Fe-S) centers, to quinones in the respiratory chain. The immediate electron acceptor for the enzyme in this species is believed to be ubiquinone. Couples the redox reaction to proton translocation (for every two electrons transferred, four hydrogen ions are translocated across the cytoplasmic membrane), and thus conserves the redox energy in a proton gradient. The sequence is that of NADH-quinone oxidoreductase subunit N from Caulobacter sp. (strain K31).